The primary structure comprises 352 residues: Selenide, water dikinase (352 aa).

Cys23 is a catalytic residue. Residues Lys26 and 54-56 (SRD) each bind ATP. Residue Asp57 coordinates Mg(2+). Residues Asp74, Asp97, and 145–147 (GHS) each bind ATP. Asp97 contributes to the Mg(2+) binding site. Asp233 lines the Mg(2+) pocket.

This sequence belongs to the selenophosphate synthase 1 family. Class I subfamily. Homodimer. The cofactor is Mg(2+).

It catalyses the reaction hydrogenselenide + ATP + H2O = selenophosphate + AMP + phosphate + 2 H(+). Functionally, synthesizes selenophosphate from selenide and ATP. The protein is Selenide, water dikinase of Shewanella sp. (strain MR-4).